The primary structure comprises 288 residues: 4-diphosphocytidyl-2-C-methyl-D-erythritol kinase (288 aa).

Residue K8 is part of the active site. Residue 90–100 (PVGAGLAGGSS) participates in ATP binding. D132 is an active-site residue.

This sequence belongs to the GHMP kinase family. IspE subfamily.

It catalyses the reaction 4-CDP-2-C-methyl-D-erythritol + ATP = 4-CDP-2-C-methyl-D-erythritol 2-phosphate + ADP + H(+). It participates in isoprenoid biosynthesis; isopentenyl diphosphate biosynthesis via DXP pathway; isopentenyl diphosphate from 1-deoxy-D-xylulose 5-phosphate: step 3/6. Its function is as follows. Catalyzes the phosphorylation of the position 2 hydroxy group of 4-diphosphocytidyl-2C-methyl-D-erythritol. This is 4-diphosphocytidyl-2-C-methyl-D-erythritol kinase from Chlamydia trachomatis serovar L2b (strain UCH-1/proctitis).